Here is a 404-residue protein sequence, read N- to C-terminus: S-adenosylmethionine synthase (404 aa).

A compositionally biased stretch (polar residues) spans 1–13 (MSQSRYFFTSESV). Residues 1-21 (MSQSRYFFTSESVSEGHPDKV) form a disordered region. His17 serves as a coordination point for ATP. A Mg(2+)-binding site is contributed by Asp19. Glu45 is a K(+) binding site. The L-methionine site is built by Glu58 and Gln101. The flexible loop stretch occupies residues 101 to 111 (QSPDINRGVDR). ATP-binding positions include 172 to 174 (DAK), 245 to 246 (RF), Asp254, 260 to 261 (RK), Ala277, and Lys281. Position 254 (Asp254) interacts with L-methionine. L-methionine is bound at residue Lys285.

Belongs to the AdoMet synthase family. As to quaternary structure, homotetramer; dimer of dimers. Mg(2+) serves as cofactor. Requires K(+) as cofactor.

It is found in the cytoplasm. It carries out the reaction L-methionine + ATP + H2O = S-adenosyl-L-methionine + phosphate + diphosphate. It participates in amino-acid biosynthesis; S-adenosyl-L-methionine biosynthesis; S-adenosyl-L-methionine from L-methionine: step 1/1. Catalyzes the formation of S-adenosylmethionine (AdoMet) from methionine and ATP. The overall synthetic reaction is composed of two sequential steps, AdoMet formation and the subsequent tripolyphosphate hydrolysis which occurs prior to release of AdoMet from the enzyme. This Chlorobium phaeobacteroides (strain DSM 266 / SMG 266 / 2430) protein is S-adenosylmethionine synthase.